The primary structure comprises 200 residues: Cytochrome c biogenesis ATP-binding export protein CcmA (200 aa).

The ABC transporter domain occupies 1 to 199 (MRLTGRGLRC…AARELRIGGA (199 aa)). Position 35-42 (35-42 (GANGAGKT)) interacts with ATP.

Belongs to the ABC transporter superfamily. CcmA exporter (TC 3.A.1.107) family. In terms of assembly, the complex is composed of two ATP-binding proteins (CcmA) and two transmembrane proteins (CcmB).

The protein resides in the cell inner membrane. The enzyme catalyses heme b(in) + ATP + H2O = heme b(out) + ADP + phosphate + H(+). In terms of biological role, part of the ABC transporter complex CcmAB involved in the biogenesis of c-type cytochromes; once thought to export heme, this seems not to be the case, but its exact role is uncertain. Responsible for energy coupling to the transport system. This chain is Cytochrome c biogenesis ATP-binding export protein CcmA, found in Rhodopseudomonas palustris (strain BisB18).